A 259-amino-acid polypeptide reads, in one-letter code: Polycomb group RING finger protein 1 (259 aa).

A2 carries the N-acetylalanine modification. Residue S3 is modified to Phosphoserine. Residue K24 forms a Glycyl lysine isopeptide (Lys-Gly) (interchain with G-Cter in SUMO2) linkage. The RING-type zinc finger occupies 47 to 86 (CCLCAGYFVDATTITECLHTFCKSCIVKYLQTSKYCPMCN). The segment at 86-247 (NIKIHETQPL…LSHWFGKPSP (162 aa)) is necessary for repressor activity. K88 is covalently cross-linked (Glycyl lysine isopeptide (Lys-Gly) (interchain with G-Cter in SUMO2)). A required for the interaction with the KDM2B-SKP1 heterodimeric complex region spans residues 150-255 (LPFSSFDHSK…SPLLLQYSVK (106 aa)). Residues 167–255 (EQLSLCLERL…SPLLLQYSVK (89 aa)) form an RING-finger and WD40-associated ubiquitin-like domain (RAWUL); sufficient for interaction with BCOR and BCORL1 region.

As to quaternary structure, interacts with BCORL1, forming heterodimers. The PCGF1-BCORL1 heterodimeric complex interacts with the KDM2B-SKP1 heterodimeric complex to form a homotetrameric polycomb repression complex 1 (PRC1.1). Component of the repressive BCOR complex containing a Polycomb group subcomplex at least composed of RYBP, RING1 and RNF2/RING2. Specifically interacts with BCOR, RING1 and RNF2/RING2. Component of a PRC1-like complex. Interacts with CBX6, CBX7 and CBX8. Interacts with DPPA4, NANOG, POU5F1 and RYBP.

The protein resides in the nucleus. Component of the Polycomb group (PcG) multiprotein BCOR complex, a complex required to maintain the transcriptionally repressive state of some genes, such as BCL6 and the cyclin-dependent kinase inhibitor, CDKN1A. Transcriptional repressor that may be targeted to the DNA by BCL6; this transcription repressor activity may be related to PKC signaling pathway. Represses CDKN1A expression by binding to its promoter, and this repression is dependent on the retinoic acid response element (RARE element). Promotes cell cycle progression and enhances cell proliferation as well. May have a positive role in tumor cell growth by down-regulating CDKN1A. Component of a Polycomb group (PcG) multiprotein PRC1-like complex, a complex class required to maintain the transcriptionally repressive state of many genes, including Hox genes, throughout development. PcG PRC1 complex acts via chromatin remodeling and modification of histones; it mediates monoubiquitination of histone H2A 'Lys-119', rendering chromatin heritably changed in its expressibility. Within the PRC1-like complex, regulates RNF2 ubiquitin ligase activity. Regulates the expression of DPPA4 and NANOG in the NT2 embryonic carcinoma cells. This Bos taurus (Bovine) protein is Polycomb group RING finger protein 1 (PCGF1).